We begin with the raw amino-acid sequence, 260 residues long: Tropinone reductase 2 (260 aa).

13–37 is a binding site for NADP(+); it reads LVTGGSRGIGYGIVEELANLGASVY. Ser146 is a binding site for substrate. Tyr159 functions as the Proton acceptor in the catalytic mechanism.

Belongs to the short-chain dehydrogenases/reductases (SDR) family.

The catalysed reaction is pseudotropine + NADP(+) = tropinone + NADPH + H(+). The protein operates within alkaloid biosynthesis; tropane alkaloid biosynthesis. In terms of biological role, catalyzes the stereospecific reduction of tropinone to pseudotropine. The sequence is that of Tropinone reductase 2 (TR2) from Hyoscyamus niger (Black henbane).